Reading from the N-terminus, the 283-residue chain is Pantothenate synthetase (283 aa).

30–37 serves as a coordination point for ATP; sequence MGYLHEGH. The active-site Proton donor is the histidine 37. Glutamine 61 is a binding site for (R)-pantoate. Glutamine 61 is a binding site for beta-alanine. 147 to 150 contacts ATP; that stretch reads GRKD. Position 153 (glutamine 153) interacts with (R)-pantoate. ATP is bound by residues valine 176 and 184 to 187; that span reads MSSR.

This sequence belongs to the pantothenate synthetase family. Homodimer.

The protein resides in the cytoplasm. It catalyses the reaction (R)-pantoate + beta-alanine + ATP = (R)-pantothenate + AMP + diphosphate + H(+). The protein operates within cofactor biosynthesis; (R)-pantothenate biosynthesis; (R)-pantothenate from (R)-pantoate and beta-alanine: step 1/1. Its function is as follows. Catalyzes the condensation of pantoate with beta-alanine in an ATP-dependent reaction via a pantoyl-adenylate intermediate. The sequence is that of Pantothenate synthetase from Syntrophotalea carbinolica (strain DSM 2380 / NBRC 103641 / GraBd1) (Pelobacter carbinolicus).